A 185-amino-acid chain; its full sequence is Ribosome-recycling factor (185 aa).

Belongs to the RRF family.

The protein resides in the cytoplasm. Responsible for the release of ribosomes from messenger RNA at the termination of protein biosynthesis. May increase the efficiency of translation by recycling ribosomes from one round of translation to another. This is Ribosome-recycling factor from Campylobacter lari (strain RM2100 / D67 / ATCC BAA-1060).